The chain runs to 156 residues: Small ribosomal subunit protein uS7 (156 aa).

The protein belongs to the universal ribosomal protein uS7 family. Part of the 30S ribosomal subunit. Contacts proteins S9 and S11.

Its function is as follows. One of the primary rRNA binding proteins, it binds directly to 16S rRNA where it nucleates assembly of the head domain of the 30S subunit. Is located at the subunit interface close to the decoding center, probably blocks exit of the E-site tRNA. In Laribacter hongkongensis (strain HLHK9), this protein is Small ribosomal subunit protein uS7.